The sequence spans 396 residues: Inositol polyphosphate multikinase (396 aa).

Positions 1-13 (MAAEPPALRLRPP) are enriched in low complexity. Residues 1–22 (MAAEPPALRLRPPGSTGDSPPV) are disordered. The residue at position 2 (Ala-2) is an N-acetylalanine. Ser-19 carries the post-translational modification Phosphoserine. Lys-58 is an ATP binding site. Arg-65 lines the substrate pocket. ATP contacts are provided by residues 114-116 (EDV) and Asp-127. Residues Lys-129, 143–150 (KIQQQVSK), and Gln-179 each bind substrate. The Nuclear localization signal motif lies at 300-310 (RHRKLYAKKHQ). Asp-365 lines the ATP pocket.

This sequence belongs to the inositol phosphokinase (IPK) family. Mg(2+) serves as cofactor.

Its subcellular location is the nucleus. The enzyme catalyses 1D-myo-inositol 1,4,5-trisphosphate + 2 ATP = 1D-myo-inositol 1,3,4,5,6-pentakisphosphate + 2 ADP + 2 H(+). It catalyses the reaction 1D-myo-inositol 1,3,4,6-tetrakisphosphate + ATP = 1D-myo-inositol 1,3,4,5,6-pentakisphosphate + ADP + H(+). It carries out the reaction 1-octadecanoyl-2-(5Z,8Z,11Z,14Z)-eicosatetraenoyl-sn-glycero-3-phospho-1D-myo-inositol 4,5-bisphosphate + ATP = 1-octadecanoyl-2-(5Z,8Z,11Z,14Z-eicosatetraenoyl)-sn-glycero-3-phospho-(1D-myo-inositol 3,4,5-triphosphate) + ADP + H(+). The catalysed reaction is a 1,2-diacyl-sn-glycero-3-phospho-(1D-myo-inositol-4,5-bisphosphate) + ATP = a 1,2-diacyl-sn-glycero-3-phospho-(1D-myo-inositol-3,4,5-trisphosphate) + ADP + H(+). The enzyme catalyses 1D-myo-inositol 1,4,5,6-tetrakisphosphate + ATP = 1D-myo-inositol 1,3,4,5,6-pentakisphosphate + ADP + H(+). Its pathway is phospholipid metabolism; phosphatidylinositol metabolism. Its function is as follows. Inositol phosphate kinase with a broad substrate specificity. Phosphorylates inositol 1,4,5-trisphosphate (Ins(1,4,5)P3) first to inositol 1,3,4,5-tetrakisphosphate and then to inositol 1,3,4,5,6-pentakisphosphate (Ins(1,3,4,5,6)P5). Phosphorylates inositol 1,3,4,6-tetrakisphosphate (Ins(1,3,4,6)P4). Phosphorylates inositol 1,4,5,6-tetrakisphosphate (Ins(1,4,5,6)P4). Phosphorylates glycero-3-phospho-1D-myo-inositol 4,5-bisphosphate to glycero-3-phospho-1D-myo-inositol 3,4,5-trisphosphate. Plays an important role in MLKL-mediated necroptosis via its role in the biosynthesis of inositol pentakisphosphate (InsP5) and inositol hexakisphosphate (InsP6). Binding of these highly phosphorylated inositol phosphates to MLKL mediates the release of an N-terminal auto-inhibitory region, leading to activation of the kinase. Essential for activated phospho-MLKL to oligomerize and localize to the cell membrane during necroptosis. Required for normal embryonic development, probably via its role in the biosynthesis of inositol 1,3,4,5,6-pentakisphosphate (Ins(1,3,4,5,6)P5) and inositol hexakisphosphate (InsP6). The polypeptide is Inositol polyphosphate multikinase (Ipmk) (Mus musculus (Mouse)).